A 426-amino-acid polypeptide reads, in one-letter code: Gamma-glutamyl phosphate reductase (426 aa).

Belongs to the gamma-glutamyl phosphate reductase family.

The protein localises to the cytoplasm. It carries out the reaction L-glutamate 5-semialdehyde + phosphate + NADP(+) = L-glutamyl 5-phosphate + NADPH + H(+). The protein operates within amino-acid biosynthesis; L-proline biosynthesis; L-glutamate 5-semialdehyde from L-glutamate: step 2/2. Functionally, catalyzes the NADPH-dependent reduction of L-glutamate 5-phosphate into L-glutamate 5-semialdehyde and phosphate. The product spontaneously undergoes cyclization to form 1-pyrroline-5-carboxylate. The polypeptide is Gamma-glutamyl phosphate reductase (Deinococcus geothermalis (strain DSM 11300 / CIP 105573 / AG-3a)).